A 267-amino-acid chain; its full sequence is MTKKIVLQIAYQGTSYSGWQYQPNALSIQEVLKTILKKIAGFRISVISSGRTDAGVHAQGQIAHFHCPDHPHFTDPRQIQKMLNALLPHDIVIRDAVMTDGDFHSRFSAIAKEYRYTLSLLPKPLPHHRLFCFSPRYKLNIARMQEAAQYLVGTHDFASFANLGREYSSTIRTLYTLDLSEQEHLVTVICRGNGFLYKMVRNIVGALLDIGKGKYPPEHLLDMLATKDRRKGPPSAPPYGLSLHHVCYPPPYQWFCKHEHNNSSEGK.

The active-site Nucleophile is the Asp53. Tyr114 is a binding site for substrate.

It belongs to the tRNA pseudouridine synthase TruA family. As to quaternary structure, homodimer.

The enzyme catalyses uridine(38/39/40) in tRNA = pseudouridine(38/39/40) in tRNA. In terms of biological role, formation of pseudouridine at positions 38, 39 and 40 in the anticodon stem and loop of transfer RNAs. The chain is tRNA pseudouridine synthase A from Chlamydia trachomatis serovar L2b (strain UCH-1/proctitis).